We begin with the raw amino-acid sequence, 396 residues long: MRFRSSSHSLKHVDRELKELINSSENANKCGECGNFYPTWCSVNLGVFLCGRCASVHRKVFGSRDDDAFSNVKSLSMDRWTREDIDELVSLGGNKGNARFWNPKNVPFPFDGDDDKAIVEHYIRDKYILGKFRYDEIKPEDFGSRMDDFDGESDRFDERNRSRSRSRSHSFYKGGHNRSDYGGSRDSFQSSGSRYSRQLAELKDMGFGDTNKNLDALSSAHGNINRAIDYLEKSSSSRNSVSAAATTSTPPLPRRRATTSGPQPAIFDGTNVITPDFTSNSASFVQAKPAVFDGTLQQYYDPATGMIYVDQQQYAMAMQQQQQQQQQLAVAQAQAQAQAQAQAQVQAQAQAQAQAQAQAQQIQMQQLQMQQQQQAPLSFQQMSQGGNLPQGYFYTQ.

The 128-residue stretch at 14 to 141 (DRELKELINS…FRYDEIKPED (128 aa)) folds into the Arf-GAP domain. The segment at 30-53 (CGECGNFYPTWCSVNLGVFLCGRC) adopts a C4-type zinc-finger fold. Basic and acidic residues predominate over residues 148 to 161 (DFDGESDRFDERNR). Disordered stretches follow at residues 148 to 194 (DFDG…SGSR) and 233 to 266 (KSSSSRNSVSAAATTSTPPLPRRRATTSGPQPAI). A Phosphoserine modification is found at Ser153. Tyr181 bears the Phosphotyrosine mark. Ser184 and Ser187 each carry phosphoserine. Positions 193 to 234 (SRYSRQLAELKDMGFGDTNKNLDALSSAHGNINRAIDYLEKS) constitute a UBA domain. Over residues 234–249 (SSSSRNSVSAAATTST) the composition is skewed to low complexity. Phosphoserine is present on Ser240. Thr249 is subject to Phosphothreonine.

The protein resides in the nucleus. Appears to modulate the timing of budding to obtain an appropriate cell size independent of the DNA replication cycle. Transcription factor involved in both heat resistance and flocculation. This Saccharomyces cerevisiae (strain ATCC 204508 / S288c) (Baker's yeast) protein is Protein GTS1 (GTS1).